The following is a 134-amino-acid chain: Small ribosomal subunit protein uS11 (134 aa).

Residues 1–24 (MATKMAGVKRAGRKRKERKNIERG) are disordered.

The protein belongs to the universal ribosomal protein uS11 family. In terms of assembly, part of the 30S ribosomal subunit. Interacts with proteins S7 and S18. Binds to IF-3.

Its function is as follows. Located on the platform of the 30S subunit, it bridges several disparate RNA helices of the 16S rRNA. Forms part of the Shine-Dalgarno cleft in the 70S ribosome. In Acetivibrio thermocellus (strain ATCC 27405 / DSM 1237 / JCM 9322 / NBRC 103400 / NCIMB 10682 / NRRL B-4536 / VPI 7372) (Clostridium thermocellum), this protein is Small ribosomal subunit protein uS11.